A 307-amino-acid polypeptide reads, in one-letter code: Porphobilinogen deaminase (307 aa).

Cys239 is modified (S-(dipyrrolylmethanemethyl)cysteine).

It belongs to the HMBS family. As to quaternary structure, monomer. It depends on dipyrromethane as a cofactor.

It carries out the reaction 4 porphobilinogen + H2O = hydroxymethylbilane + 4 NH4(+). Its pathway is porphyrin-containing compound metabolism; protoporphyrin-IX biosynthesis; coproporphyrinogen-III from 5-aminolevulinate: step 2/4. Functionally, tetrapolymerization of the monopyrrole PBG into the hydroxymethylbilane pre-uroporphyrinogen in several discrete steps. This chain is Porphobilinogen deaminase, found in Campylobacter jejuni subsp. jejuni serotype O:6 (strain 81116 / NCTC 11828).